The primary structure comprises 181 residues: ATP-dependent protease subunit HslV (181 aa).

The active site involves threonine 7. 3 residues coordinate Na(+): glycine 166, cysteine 169, and threonine 172.

Belongs to the peptidase T1B family. HslV subfamily. In terms of assembly, a double ring-shaped homohexamer of HslV is capped on each side by a ring-shaped HslU homohexamer. The assembly of the HslU/HslV complex is dependent on binding of ATP.

Its subcellular location is the cytoplasm. The catalysed reaction is ATP-dependent cleavage of peptide bonds with broad specificity.. With respect to regulation, allosterically activated by HslU binding. In terms of biological role, protease subunit of a proteasome-like degradation complex believed to be a general protein degrading machinery. This chain is ATP-dependent protease subunit HslV, found in Acidovorax ebreus (strain TPSY) (Diaphorobacter sp. (strain TPSY)).